Consider the following 678-residue polypeptide: Gamma-tubulin complex component 2 (678 aa).

Triggers nucleus envelope localization regions lie at residues 63-116, 118-180, 290-318, 472-548, and 587-622; these read QELI…RIFP, CEYY…FYCQ, IPGFLANIAATILTTGKYLNVMRECGHNV, LSIV…EVLE, and PDVLKKMEKLKSVCLQYAAATQWLISSSIDINSQSH.

It belongs to the TUBGCP family. As to quaternary structure, part of the gamma-tubulin complex. Gamma-tubulin complex is composed of gamma-tubulin and GCP proteins (e.g. GCP2 and GCP3). Interacts directly with GCP3.

Its subcellular location is the cytoplasm. The protein resides in the cytoskeleton. It localises to the microtubule organizing center. It is found in the nucleus envelope. The protein localises to the cell cortex. Functionally, gamma-tubulin complex is necessary for microtubule nucleation at the microtubule organizing centers (MTOCs). Required for the positioning of the gamma-tubulin-containing complex on pre-existing microtubules and for the proper organization of cortical arrays. The polypeptide is Gamma-tubulin complex component 2 (GCP2) (Arabidopsis thaliana (Mouse-ear cress)).